Here is an 89-residue protein sequence, read N- to C-terminus: Small ribosomal subunit protein uS15 (89 aa).

It belongs to the universal ribosomal protein uS15 family. Part of the 30S ribosomal subunit. Forms a bridge to the 50S subunit in the 70S ribosome, contacting the 23S rRNA.

One of the primary rRNA binding proteins, it binds directly to 16S rRNA where it helps nucleate assembly of the platform of the 30S subunit by binding and bridging several RNA helices of the 16S rRNA. Functionally, forms an intersubunit bridge (bridge B4) with the 23S rRNA of the 50S subunit in the ribosome. The sequence is that of Small ribosomal subunit protein uS15 from Corynebacterium diphtheriae (strain ATCC 700971 / NCTC 13129 / Biotype gravis).